The chain runs to 428 residues: Enolase 2 (428 aa).

(2R)-2-phosphoglycerate is bound at residue Gln162. Glu204 serves as the catalytic Proton donor. Residues Asp241, Glu285, and Asp312 each coordinate Mg(2+). 4 residues coordinate (2R)-2-phosphoglycerate: Lys337, Arg366, Ser367, and Lys388. Lys337 (proton acceptor) is an active-site residue.

The protein belongs to the enolase family. Mg(2+) serves as cofactor.

The protein localises to the cytoplasm. The protein resides in the secreted. It localises to the cell surface. It catalyses the reaction (2R)-2-phosphoglycerate = phosphoenolpyruvate + H2O. The protein operates within carbohydrate degradation; glycolysis; pyruvate from D-glyceraldehyde 3-phosphate: step 4/5. Functionally, catalyzes the reversible conversion of 2-phosphoglycerate (2-PG) into phosphoenolpyruvate (PEP). It is essential for the degradation of carbohydrates via glycolysis. In Lactobacillus johnsonii (strain CNCM I-12250 / La1 / NCC 533), this protein is Enolase 2.